The following is a 40-amino-acid chain: Thioredoxin (40 aa).

The cysteines at positions 29 and 32 are disulfide-linked.

The protein belongs to the thioredoxin family.

Functionally, participates in various redox reactions through the reversible oxidation of its active center dithiol to a disulfide and catalyzes dithiol-disulfide exchange reactions. The chain is Thioredoxin (trxA) from Clostridium sporogenes.